Here is a 315-residue protein sequence, read N- to C-terminus: Glycine--tRNA ligase alpha subunit (315 aa).

Belongs to the class-II aminoacyl-tRNA synthetase family. Tetramer of two alpha and two beta subunits.

Its subcellular location is the cytoplasm. It carries out the reaction tRNA(Gly) + glycine + ATP = glycyl-tRNA(Gly) + AMP + diphosphate. The protein is Glycine--tRNA ligase alpha subunit of Pseudomonas putida (strain GB-1).